Reading from the N-terminus, the 276-residue chain is Alpha N-terminal protein methyltransferase 1 (276 aa).

A disordered region spans residues 1-57 (MTTTLEEQLSDKLQMMDETTDKVQGSSKQKDDSSIAASSDAKTASPSSSDSSTKVAA). The segment covering 34–57 (SIAASSDAKTASPSSSDSSTKVAA) has biased composition (low complexity). S-adenosyl-L-methionine is bound by residues Gly-114, Arg-119, 136–138 (EQD), 167–168 (LQ), and Gln-182.

Belongs to the methyltransferase superfamily. NTM1 family.

The enzyme catalyses N-terminal L-alanyl-L-prolyl-L-lysyl-[protein] + 3 S-adenosyl-L-methionine = N-terminal N,N,N-trimethyl-L-alanyl-L-prolyl-L-lysyl-[protein] + 3 S-adenosyl-L-homocysteine + 3 H(+). It catalyses the reaction N-terminal L-seryl-L-prolyl-L-lysyl-[protein] + 3 S-adenosyl-L-methionine = N-terminal N,N,N-trimethyl-L-seryl-L-prolyl-L-lysyl-[protein] + 3 S-adenosyl-L-homocysteine + 3 H(+). The catalysed reaction is N-terminal L-prolyl-L-prolyl-L-lysyl-[protein] + 2 S-adenosyl-L-methionine = N-terminal N,N-dimethyl-L-prolyl-L-prolyl-L-lysyl-[protein] + 2 S-adenosyl-L-homocysteine + 2 H(+). Functionally, alpha-N-methyltransferase that methylates the N-terminus of target proteins containing the N-terminal motif [Ala/Pro/Ser]-Pro-Lys when the initiator Met is cleaved. Specifically catalyzes mono-, di- or tri-methylation of exposed alpha-amino group of Ala or Ser residue in the [Ala/Ser]-Pro-Lys motif and mono- or di-methylation of Pro in the Pro-Pro-Lys motif. This chain is Alpha N-terminal protein methyltransferase 1 (Ntmt), found in Drosophila melanogaster (Fruit fly).